Here is an 842-residue protein sequence, read N- to C-terminus: Serine/threonine-protein phosphatase 4 regulatory subunit 3 (842 aa).

Regulatory subunit 3 (R3) of the histone H2A phosphatase complex (HTP-C) consisting of PPH3, PSY2 and PSY4.

Its subcellular location is the nucleus. In terms of biological role, core regulatory subunit of the histone H2A phosphatase complex, which dephosphorylates H2AS128ph (gamma-H2A) that has been displaced from sites of DNA lesions in the double-stranded DNA break repair process. Dephosphorylation is necessary for efficient recovery from the DNA damage checkpoint. The protein is Serine/threonine-protein phosphatase 4 regulatory subunit 3 (PSY2) of Candida glabrata (strain ATCC 2001 / BCRC 20586 / JCM 3761 / NBRC 0622 / NRRL Y-65 / CBS 138) (Yeast).